A 362-amino-acid polypeptide reads, in one-letter code: Protein BIG GRAIN 1-like D (362 aa).

Disordered regions lie at residues 22–113 (IDPK…TLFH), 132–168 (KFNRHDENWENTRNRRSVKSSGNQKKPKTPASPGGRI), and 303–327 (VKTNGFEDYEDDDEDDDDDDVASDS). The span at 23–47 (DPKTQKTQPYVGSVNTTTKKQSIVT) shows a compositional bias: polar residues. Basic and acidic residues predominate over residues 50–60 (VPDRKIHRDRF). The span at 63-78 (SVSSSSDSNSSIFSSS) shows a compositional bias: low complexity. Residues 132 to 144 (KFNRHDENWENTR) are compositionally biased toward basic and acidic residues. Residues 309–324 (EDYEDDDEDDDDDDVA) show a composition bias toward acidic residues.

This sequence belongs to the BIG GRAIN 1 (BG1) plant protein family.

Its subcellular location is the cell membrane. In terms of biological role, involved in auxin transport. Regulator of the auxin signaling pathway. This is Protein BIG GRAIN 1-like D from Arabidopsis thaliana (Mouse-ear cress).